The chain runs to 337 residues: N-acetyl-gamma-glutamyl-phosphate reductase (337 aa).

C145 is a catalytic residue.

It belongs to the NAGSA dehydrogenase family. Type 1 subfamily.

The protein resides in the cytoplasm. It catalyses the reaction N-acetyl-L-glutamate 5-semialdehyde + phosphate + NADP(+) = N-acetyl-L-glutamyl 5-phosphate + NADPH + H(+). It participates in amino-acid biosynthesis; L-arginine biosynthesis; N(2)-acetyl-L-ornithine from L-glutamate: step 3/4. Functionally, catalyzes the NADPH-dependent reduction of N-acetyl-5-glutamyl phosphate to yield N-acetyl-L-glutamate 5-semialdehyde. The sequence is that of N-acetyl-gamma-glutamyl-phosphate reductase from Methanosarcina barkeri (strain Fusaro / DSM 804).